The primary structure comprises 427 residues: Tol-Pal system protein TolB (427 aa).

Residues 1–23 (MKLIARLMSMCAVLFFAINSAYA) form the signal peptide.

The protein belongs to the TolB family. The Tol-Pal system is composed of five core proteins: the inner membrane proteins TolA, TolQ and TolR, the periplasmic protein TolB and the outer membrane protein Pal. They form a network linking the inner and outer membranes and the peptidoglycan layer.

Its subcellular location is the periplasm. Part of the Tol-Pal system, which plays a role in outer membrane invagination during cell division and is important for maintaining outer membrane integrity. In Actinobacillus succinogenes (strain ATCC 55618 / DSM 22257 / CCUG 43843 / 130Z), this protein is Tol-Pal system protein TolB.